Consider the following 470-residue polypeptide: 3-isopropylmalate dehydratase large subunit (470 aa).

Cys349, Cys409, and Cys412 together coordinate [4Fe-4S] cluster.

The protein belongs to the aconitase/IPM isomerase family. LeuC type 1 subfamily. Heterodimer of LeuC and LeuD. It depends on [4Fe-4S] cluster as a cofactor.

The enzyme catalyses (2R,3S)-3-isopropylmalate = (2S)-2-isopropylmalate. It participates in amino-acid biosynthesis; L-leucine biosynthesis; L-leucine from 3-methyl-2-oxobutanoate: step 2/4. Functionally, catalyzes the isomerization between 2-isopropylmalate and 3-isopropylmalate, via the formation of 2-isopropylmaleate. The protein is 3-isopropylmalate dehydratase large subunit of Methylobacterium radiotolerans (strain ATCC 27329 / DSM 1819 / JCM 2831 / NBRC 15690 / NCIMB 10815 / 0-1).